The following is a 554-amino-acid chain: Glutamine--tRNA ligase (554 aa).

The 'HIGH' region motif lies at 34-44 (PEPNGYLHIGH). ATP-binding positions include 35–37 (EPN) and 41–47 (HIGHAKS). The L-glutamine site is built by Asp67 and Tyr212. ATP-binding positions include Thr231, 261 to 262 (RL), and 269 to 271 (MSK). The short motif at 268-272 (VMSKR) is the 'KMSKS' region element. Residues 317-324 (TKQDNTIE) are interaction with tRNA.

Belongs to the class-I aminoacyl-tRNA synthetase family. As to quaternary structure, monomer.

Its subcellular location is the cytoplasm. The catalysed reaction is tRNA(Gln) + L-glutamine + ATP = L-glutaminyl-tRNA(Gln) + AMP + diphosphate. This is Glutamine--tRNA ligase from Escherichia coli O7:K1 (strain IAI39 / ExPEC).